Reading from the N-terminus, the 116-residue chain is Aspartate 1-decarboxylase (116 aa).

Residue S25 is the Schiff-base intermediate with substrate; via pyruvic acid of the active site. Pyruvic acid (Ser) is present on S25. A substrate-binding site is contributed by T57. Y58 (proton donor) is an active-site residue. 73–75 is a binding site for substrate; sequence GAA.

The protein belongs to the PanD family. In terms of assembly, heterooctamer of four alpha and four beta subunits. Requires pyruvate as cofactor. In terms of processing, is synthesized initially as an inactive proenzyme, which is activated by self-cleavage at a specific serine bond to produce a beta-subunit with a hydroxyl group at its C-terminus and an alpha-subunit with a pyruvoyl group at its N-terminus.

Its subcellular location is the cytoplasm. The catalysed reaction is L-aspartate + H(+) = beta-alanine + CO2. It functions in the pathway cofactor biosynthesis; (R)-pantothenate biosynthesis; beta-alanine from L-aspartate: step 1/1. Functionally, catalyzes the pyruvoyl-dependent decarboxylation of aspartate to produce beta-alanine. The protein is Aspartate 1-decarboxylase of Fervidobacterium nodosum (strain ATCC 35602 / DSM 5306 / Rt17-B1).